We begin with the raw amino-acid sequence, 116 residues long: Ribonuclease P protein component (116 aa).

It belongs to the RnpA family. As to quaternary structure, consists of a catalytic RNA component (M1 or rnpB) and a protein subunit.

The enzyme catalyses Endonucleolytic cleavage of RNA, removing 5'-extranucleotides from tRNA precursor.. In terms of biological role, RNaseP catalyzes the removal of the 5'-leader sequence from pre-tRNA to produce the mature 5'-terminus. It can also cleave other RNA substrates such as 4.5S RNA. The protein component plays an auxiliary but essential role in vivo by binding to the 5'-leader sequence and broadening the substrate specificity of the ribozyme. In Leuconostoc citreum (strain KM20), this protein is Ribonuclease P protein component.